Here is a 491-residue protein sequence, read N- to C-terminus: ATP-dependent protease ATPase subunit HslU (491 aa).

Residues Ile-34, 76-81 (GVGKTE), Asp-296, Glu-364, and Arg-436 each bind ATP.

Belongs to the ClpX chaperone family. HslU subfamily. A double ring-shaped homohexamer of HslV is capped on each side by a ring-shaped HslU homohexamer. The assembly of the HslU/HslV complex is dependent on binding of ATP.

It localises to the cytoplasm. ATPase subunit of a proteasome-like degradation complex; this subunit has chaperone activity. The binding of ATP and its subsequent hydrolysis by HslU are essential for unfolding of protein substrates subsequently hydrolyzed by HslV. HslU recognizes the N-terminal part of its protein substrates and unfolds these before they are guided to HslV for hydrolysis. The protein is ATP-dependent protease ATPase subunit HslU of Chlorobaculum tepidum (strain ATCC 49652 / DSM 12025 / NBRC 103806 / TLS) (Chlorobium tepidum).